Here is a 1101-residue protein sequence, read N- to C-terminus: Coiled-coil domain-containing protein 150 (1101 aa).

4 coiled-coil regions span residues 106–299 (RLES…DLTS), 398–680 (AAHA…KEDN), 712–940 (DSEI…NYEQ), and 970–1033 (VRNK…EAHR). Positions 1055–1071 (SGEDRWQEKDQDVKHDV) are enriched in basic and acidic residues. The disordered stretch occupies residues 1055 to 1101 (SGEDRWQEKDQDVKHDVMSNQSVLHRWERKQNLRPMPKKYHSEVQRK).

The sequence is that of Coiled-coil domain-containing protein 150 (CCDC150) from Homo sapiens (Human).